The chain runs to 454 residues: CCA-adding enzyme (454 aa).

Residues S59 and R62 each coordinate ATP. 2 residues coordinate CTP: S59 and R62. Mg(2+) is bound by residues D71, D73, and D125. H148, K167, and Y176 together coordinate ATP. CTP-binding residues include H148, K167, and Y176.

The protein belongs to the tRNA nucleotidyltransferase/poly(A) polymerase family. Archaeal CCA-adding enzyme subfamily. As to quaternary structure, homodimer. The cofactor is Mg(2+).

The enzyme catalyses a tRNA precursor + 2 CTP + ATP = a tRNA with a 3' CCA end + 3 diphosphate. It catalyses the reaction a tRNA with a 3' CCA end + 2 CTP + ATP = a tRNA with a 3' CCACCA end + 3 diphosphate. Catalyzes the addition and repair of the essential 3'-terminal CCA sequence in tRNAs without using a nucleic acid template. Adds these three nucleotides in the order of C, C, and A to the tRNA nucleotide-73, using CTP and ATP as substrates and producing inorganic pyrophosphate. tRNA 3'-terminal CCA addition is required both for tRNA processing and repair. Also involved in tRNA surveillance by mediating tandem CCA addition to generate a CCACCA at the 3' terminus of unstable tRNAs. While stable tRNAs receive only 3'-terminal CCA, unstable tRNAs are marked with CCACCA and rapidly degraded. This Methanosarcina barkeri (strain Fusaro / DSM 804) protein is CCA-adding enzyme.